The following is a 126-amino-acid chain: Aspartate 1-decarboxylase (126 aa).

The active-site Schiff-base intermediate with substrate; via pyruvic acid is the Ser25. Ser25 bears the Pyruvic acid (Ser) mark. Thr57 contacts substrate. The Proton donor role is filled by Tyr58. 73–75 contributes to the substrate binding site; sequence GAA.

The protein belongs to the PanD family. In terms of assembly, heterooctamer of four alpha and four beta subunits. The cofactor is pyruvate. Is synthesized initially as an inactive proenzyme, which is activated by self-cleavage at a specific serine bond to produce a beta-subunit with a hydroxyl group at its C-terminus and an alpha-subunit with a pyruvoyl group at its N-terminus.

Its subcellular location is the cytoplasm. It carries out the reaction L-aspartate + H(+) = beta-alanine + CO2. It functions in the pathway cofactor biosynthesis; (R)-pantothenate biosynthesis; beta-alanine from L-aspartate: step 1/1. Its function is as follows. Catalyzes the pyruvoyl-dependent decarboxylation of aspartate to produce beta-alanine. The polypeptide is Aspartate 1-decarboxylase (Citrobacter koseri (strain ATCC BAA-895 / CDC 4225-83 / SGSC4696)).